Here is a 365-residue protein sequence, read N- to C-terminus: DNA replication and repair protein RecF (365 aa).

30–37 (GDNAQGKT) provides a ligand contact to ATP.

This sequence belongs to the RecF family.

It localises to the cytoplasm. Functionally, the RecF protein is involved in DNA metabolism; it is required for DNA replication and normal SOS inducibility. RecF binds preferentially to single-stranded, linear DNA. It also seems to bind ATP. This is DNA replication and repair protein RecF from Alkaliphilus oremlandii (strain OhILAs) (Clostridium oremlandii (strain OhILAs)).